The chain runs to 347 residues: D-alanine--D-alanine ligase (347 aa).

An ATP-grasp domain is found at 131–333 (KRVLESAGIA…YPELIERLVD (203 aa)). 161–216 (EEKLAYPVFTKPSNMGSSVGISKSENQEELRQALKLAFRYDSRVLVEQGVNAREIE) serves as a coordination point for ATP. 3 residues coordinate Mg(2+): Asp-287, Glu-300, and Asn-302.

This sequence belongs to the D-alanine--D-alanine ligase family. Requires Mg(2+) as cofactor. Mn(2+) is required as a cofactor.

The protein resides in the cytoplasm. The enzyme catalyses 2 D-alanine + ATP = D-alanyl-D-alanine + ADP + phosphate + H(+). The protein operates within cell wall biogenesis; peptidoglycan biosynthesis. Cell wall formation. This Streptococcus pneumoniae serotype 19F (strain G54) protein is D-alanine--D-alanine ligase.